We begin with the raw amino-acid sequence, 311 residues long: Urease accessory protein UreD (311 aa).

Belongs to the UreD family. UreD, UreF and UreG form a complex that acts as a GTP-hydrolysis-dependent molecular chaperone, activating the urease apoprotein by helping to assemble the nickel containing metallocenter of UreC. The UreE protein probably delivers the nickel.

The protein localises to the cytoplasm. Its function is as follows. Required for maturation of urease via the functional incorporation of the urease nickel metallocenter. This Synechococcus sp. (strain CC9605) protein is Urease accessory protein UreD.